The chain runs to 197 residues: Chaperone protein dnaJ 20, chloroplastic (197 aa).

The N-terminal 60 residues, Met-1–Lys-60, are a transit peptide targeting the chloroplast. One can recognise a J domain in the interval Ser-66–Leu-133. Residues Ser-169–Ser-197 form a disordered region.

This sequence belongs to the DnaJ family. C/III subfamily. Light-grown seedlings.

It is found in the plastid. The protein localises to the chloroplast. Functionally, plays a continuous role in plant development probably in the structural organization of compartments. The polypeptide is Chaperone protein dnaJ 20, chloroplastic (ATJ20) (Arabidopsis thaliana (Mouse-ear cress)).